Here is an 876-residue protein sequence, read N- to C-terminus: Exosome complex component 10 homolog (876 aa).

The segment at 1 to 22 is disordered; sequence MSGEESMPDEEQKQSEEEEEMI. In terms of domain architecture, 3'-5' exonuclease spans 279–445; the sequence is TMIDTKEKLE…YSYDMLREQL (167 aa). Mg(2+)-binding residues include Asp-303, Glu-305, Asp-361, and Asp-430. Residues 489–569 form the HRDC domain; sequence NTRQDYALTH…VEARDVKLEK (81 aa). Basic and acidic residues-rich tracts occupy residues 690–730, 741–752, and 834–847; these read EKQE…EFDA, VPDDPNKPKDPE, and KPVR…DPFH. The segment at 690–876 is disordered; it reads EKQEEEERKE…NRQGTINYKK (187 aa). Residues 848–861 are compositionally biased toward basic residues; sequence QKYRLKNKTKKNMA.

This sequence belongs to the exosome component 10/RRP6 family. In terms of assembly, component of the RNA exosome complex. Interacts with crn-5. Requires Mg(2+) as cofactor. In terms of tissue distribution, ubiquitously expressed.

It localises to the nucleus. It is found in the nucleolus. The protein localises to the nucleoplasm. Catalytic component of the RNA exosome complex which has 3'-&gt;5' exoribonuclease activity and participates in a multitude of cellular RNA processing and degradation events. Involved in apoptotic DNA degradation. Involved in regulation of antisense ribosomal siRNA production. Involved in response to cold-warm shock. This Caenorhabditis elegans protein is Exosome complex component 10 homolog.